Consider the following 484-residue polypeptide: Oxysterol-binding protein-related protein 2 (484 aa).

A phosphoserine mark is found at S19 and S20. Positions 35-61 (DLDTSKSTRSGKNGEKPQQENGIQKHR) are disordered. A 1,2-diacyl-sn-glycero-3-phospho-(1D-myo-inositol-4,5-bisphosphate)-binding positions include K90 and 178 to 179 (HH). Composition is skewed to basic and acidic residues over residues 319–340 (KQEK…EKAN) and 424–450 (SQEK…EWRT). Disordered regions lie at residues 319–348 (KQEK…GDVA) and 423–454 (ASQE…RWFS). Residue 431–435 (EEKQR) coordinates a 1,2-diacyl-sn-glycero-3-phospho-(1D-myo-inositol-4,5-bisphosphate).

Belongs to the OSBP family. As to quaternary structure, monomer. Homotetramer; phosphatidylinositol-4,5-bisphosphate binding promotes formation of stable tetramers. Interacts with DIAPH1. Detected in cochlea, in inner and outer hair cells in the organ of Corti (at protein level).

Its subcellular location is the cytoplasm. The protein localises to the cytosol. It is found in the lipid droplet. It localises to the cell membrane. In terms of biological role, intracellular transport protein that binds sterols and phospholipids and mediates lipid transport between intracellular compartments. Increases plasma membrane cholesterol levels and decreases phosphatidylinositol-4,5-bisphosphate levels in the cell membrane. Binds phosphoinositides, such as phosphatidylinositol-4,5-bisphosphate. Exhibits strong binding to phosphatidic acid and weak binding to phosphatidylinositol 3-phosphate. Binds cholesterol, dehydroergosterol, 22(R)-hydroxycholesterol and 25-hydroxycholesterol (in vitro). In Mus musculus (Mouse), this protein is Oxysterol-binding protein-related protein 2 (Osbpl2).